Here is a 501-residue protein sequence, read N- to C-terminus: Probable Xaa-Pro aminopeptidase pepP (501 aa).

The segment at 1–25 (MNYHSFLPLRRSSLSHSTTPPSKSR) is disordered. The span at 12-25 (SSLSHSTTPPSKSR) shows a compositional bias: polar residues. Residues aspartate 298, aspartate 309, glutamate 432, and glutamate 472 each contribute to the Mn(2+) site.

Belongs to the peptidase M24B family. The cofactor is Mn(2+).

The enzyme catalyses Release of any N-terminal amino acid, including proline, that is linked to proline, even from a dipeptide or tripeptide.. Functionally, catalyzes the removal of a penultimate prolyl residue from the N-termini of peptides. In Metarhizium acridum (strain CQMa 102), this protein is Probable Xaa-Pro aminopeptidase pepP (pepP).